A 364-amino-acid polypeptide reads, in one-letter code: MSVMVVRKKVTRKWEKLPGRNTFCCDGRVMMARQKGIFYLTLFLILGTCTLFFAFECRYLAVQLSPAIPVFAAMLFLFSMATLLRTSFSDPGVIPRALPDEAAFIEMEIEATNGAVPQGQRPPPRIKNFQINNQIVKLKYCYTCKIFRPPRASHCSICDNCVERFDHHCPWVGNCVGKRNYRYFYLFILSLSLLTIYVFAFNIVYVALKSLKIGFLETLKETPGTVLEVLICFFTLWSVVGLTGFHTFLVALNQTTNEDIKGSWTGKNRVQNPYSHGNIVKNCCEVLCGPLPPSVLDRRGILPLEESGSRPPSTQETSSSLLPQSPASTEHMNSNEMAEDTSIPEEMPPPEPPEPPQEASEAEK.

At 1–35 (MSVMVVRKKVTRKWEKLPGRNTFCCDGRVMMARQK) the chain is on the cytoplasmic side. Residues 36 to 56 (GIFYLTLFLILGTCTLFFAFE) form a helical membrane-spanning segment. At 57–63 (CRYLAVQ) the chain is on the lumenal side. Residues 64–84 (LSPAIPVFAAMLFLFSMATLL) form a helical membrane-spanning segment. Residues 85–183 (RTSFSDPGVI…NCVGKRNYRY (99 aa)) lie on the Cytoplasmic side of the membrane. The DHHC domain occupies 139 to 189 (KYCYTCKIFRPPRASHCSICDNCVERFDHHCPWVGNCVGKRNYRYFYLFIL). The active-site S-palmitoyl cysteine intermediate is Cys169. Residues 184–204 (FYLFILSLSLLTIYVFAFNIV) form a helical membrane-spanning segment. Residues 205 to 228 (YVALKSLKIGFLETLKETPGTVLE) lie on the Lumenal side of the membrane. The chain crosses the membrane as a helical span at residues 229–249 (VLICFFTLWSVVGLTGFHTFL). Topologically, residues 250–364 (VALNQTTNED…PPQEASEAEK (115 aa)) are cytoplasmic. The disordered stretch occupies residues 303–364 (PLEESGSRPP…PPQEASEAEK (62 aa)). Positions 310–336 (RPPSTQETSSSLLPQSPASTEHMNSNE) are enriched in polar residues. A compositionally biased stretch (pro residues) spans 346–356 (EMPPPEPPEPP).

The protein belongs to the DHHC palmitoyltransferase family. ERF2/ZDHHC9 subfamily. As to quaternary structure, interacts with GOLGA7.

It localises to the endoplasmic reticulum membrane. Its subcellular location is the golgi apparatus membrane. The catalysed reaction is L-cysteinyl-[protein] + hexadecanoyl-CoA = S-hexadecanoyl-L-cysteinyl-[protein] + CoA. Its function is as follows. Palmitoyltransferase that catalyzes the addition of palmitate onto various protein substrates, such as ADRB2, GSDMD, HRAS, NRAS and CGAS. The ZDHHC9-GOLGA7 complex is a palmitoyltransferase specific for HRAS and NRAS. May have a palmitoyltransferase activity toward the beta-2 adrenergic receptor/ADRB2 and therefore regulate G protein-coupled receptor signaling. Acts as a regulator of innate immunity by catalyzing palmitoylation of CGAS, thereby promoting CGAS homodimerization and cyclic GMP-AMP synthase activity. Activates pyroptosis by catalyzing palmitoylation of gasdermin-D (GSDMD), thereby promoting membrane translocation and pore formation of GSDMD. The chain is Palmitoyltransferase ZDHHC9 (Zdhhc9) from Mus musculus (Mouse).